A 264-amino-acid polypeptide reads, in one-letter code: Thymidylate synthase (264 aa).

DUMP is bound at residue R21. H51 serves as a coordination point for (6R)-5,10-methylene-5,6,7,8-tetrahydrofolate. A dUMP-binding site is contributed by 126-127 (RR). Residue C146 is the Nucleophile of the active site. Residues 166–169 (RSAD), N177, and 207–209 (HIY) contribute to the dUMP site. D169 contributes to the (6R)-5,10-methylene-5,6,7,8-tetrahydrofolate binding site. S263 is a binding site for (6R)-5,10-methylene-5,6,7,8-tetrahydrofolate.

Belongs to the thymidylate synthase family. Bacterial-type ThyA subfamily. As to quaternary structure, homodimer.

The protein resides in the cytoplasm. The catalysed reaction is dUMP + (6R)-5,10-methylene-5,6,7,8-tetrahydrofolate = 7,8-dihydrofolate + dTMP. The protein operates within pyrimidine metabolism; dTTP biosynthesis. In terms of biological role, catalyzes the reductive methylation of 2'-deoxyuridine-5'-monophosphate (dUMP) to 2'-deoxythymidine-5'-monophosphate (dTMP) while utilizing 5,10-methylenetetrahydrofolate (mTHF) as the methyl donor and reductant in the reaction, yielding dihydrofolate (DHF) as a by-product. This enzymatic reaction provides an intracellular de novo source of dTMP, an essential precursor for DNA biosynthesis. This chain is Thymidylate synthase, found in Bacillus velezensis (strain DSM 23117 / BGSC 10A6 / LMG 26770 / FZB42) (Bacillus amyloliquefaciens subsp. plantarum).